Here is a 412-residue protein sequence, read N- to C-terminus: L-cysteine:1D-myo-inositol 2-amino-2-deoxy-alpha-D-glucopyranoside ligase (412 aa).

A disordered region spans residues 1–30 (MQTWSSPSVPKLRGAPRPLRLHDTATGEVR). Cys-43 lines the Zn(2+) pocket. L-cysteinyl-5'-AMP is bound by residues 43 to 46 (CGIT), Thr-58, and 81 to 83 (NVT). The 'HIGH' region signature appears at 45–55 (ITPYDATHLGH). A 'ERGGDP' region motif is present at residues 187–192 (ERGGDP). Residue Trp-227 coordinates L-cysteinyl-5'-AMP. Cys-231 contributes to the Zn(2+) binding site. 249–251 (GSD) serves as a coordination point for L-cysteinyl-5'-AMP. His-256 provides a ligand contact to Zn(2+). Position 283 (Ile-283) interacts with L-cysteinyl-5'-AMP. The 'KMSKS' region motif lies at 289-293 (KMSKS).

Belongs to the class-I aminoacyl-tRNA synthetase family. MshC subfamily. As to quaternary structure, monomer. The cofactor is Zn(2+).

It catalyses the reaction 1D-myo-inositol 2-amino-2-deoxy-alpha-D-glucopyranoside + L-cysteine + ATP = 1D-myo-inositol 2-(L-cysteinylamino)-2-deoxy-alpha-D-glucopyranoside + AMP + diphosphate + H(+). Its function is as follows. Catalyzes the ATP-dependent condensation of GlcN-Ins and L-cysteine to form L-Cys-GlcN-Ins. In Actinosynnema mirum (strain ATCC 29888 / DSM 43827 / JCM 3225 / NBRC 14064 / NCIMB 13271 / NRRL B-12336 / IMRU 3971 / 101), this protein is L-cysteine:1D-myo-inositol 2-amino-2-deoxy-alpha-D-glucopyranoside ligase.